The chain runs to 720 residues: Translation initiation factor IF-2 (720 aa).

The interval 48–138 (KKFKASQAKD…NEVEETKEMP (91 aa)) is disordered. Low complexity-rich tracts occupy residues 60–75 (KQNT…NKQN) and 99–113 (KGKQ…NKNQ). Over residues 114-123 (KNNKNKKNNK) the composition is skewed to basic residues. The tr-type G domain maps to 222–391 (ERPAVVTIMG…GLVAEVQELK (170 aa)). The interval 231-238 (GHVDHGKT) is G1. Position 231–238 (231–238 (GHVDHGKT)) interacts with GTP. Residues 256–260 (GITQH) form a G2 region. The interval 277-280 (DTPG) is G3. GTP-binding positions include 277-281 (DTPGH) and 331-334 (NKID). A G4 region spans residues 331-334 (NKID). Positions 367-369 (SAL) are G5.

This sequence belongs to the TRAFAC class translation factor GTPase superfamily. Classic translation factor GTPase family. IF-2 subfamily.

It localises to the cytoplasm. In terms of biological role, one of the essential components for the initiation of protein synthesis. Protects formylmethionyl-tRNA from spontaneous hydrolysis and promotes its binding to the 30S ribosomal subunits. Also involved in the hydrolysis of GTP during the formation of the 70S ribosomal complex. This Staphylococcus epidermidis (strain ATCC 35984 / DSM 28319 / BCRC 17069 / CCUG 31568 / BM 3577 / RP62A) protein is Translation initiation factor IF-2.